A 349-amino-acid polypeptide reads, in one-letter code: Protein pelota homolog (349 aa).

Belongs to the eukaryotic release factor 1 family. Pelota subfamily. As to quaternary structure, monomer. A divalent metal cation is required as a cofactor.

It localises to the cytoplasm. In terms of biological role, may function in recognizing stalled ribosomes, interact with stem-loop structures in stalled mRNA molecules, and effect endonucleolytic cleavage of the mRNA. May play a role in the release non-functional ribosomes and degradation of damaged mRNAs. Has endoribonuclease activity. This chain is Protein pelota homolog, found in Nitrosopumilus maritimus (strain SCM1).